The chain runs to 308 residues: L-lactate dehydrogenase 2 (308 aa).

Residues valine 13, aspartate 34, arginine 39, tyrosine 64, and 78–79 (GV) each bind NAD(+). Residue arginine 87 coordinates substrate. Threonine 100 lines the NAD(+) pocket. 119–122 (NPVD) contributes to the substrate binding site. Threonine 142 is an NAD(+) binding site. A substrate-binding site is contributed by 147 to 150 (DSMR). Histidine 174 functions as the Proton acceptor in the catalytic mechanism. Threonine 224 serves as a coordination point for substrate.

The protein belongs to the LDH/MDH superfamily. LDH family. As to quaternary structure, homotetramer.

Its subcellular location is the cytoplasm. The catalysed reaction is (S)-lactate + NAD(+) = pyruvate + NADH + H(+). Its pathway is fermentation; pyruvate fermentation to lactate; (S)-lactate from pyruvate: step 1/1. Functionally, catalyzes the conversion of lactate to pyruvate. The protein is L-lactate dehydrogenase 2 of Lactobacillus acidophilus (strain ATCC 700396 / NCK56 / N2 / NCFM).